The sequence spans 141 residues: Large ribosomal subunit protein uL11 (141 aa).

This sequence belongs to the universal ribosomal protein uL11 family. In terms of assembly, part of the ribosomal stalk of the 50S ribosomal subunit. Interacts with L10 and the large rRNA to form the base of the stalk. L10 forms an elongated spine to which L12 dimers bind in a sequential fashion forming a multimeric L10(L12)X complex. One or more lysine residues are methylated.

Functionally, forms part of the ribosomal stalk which helps the ribosome interact with GTP-bound translation factors. This chain is Large ribosomal subunit protein uL11, found in Prochlorococcus marinus subsp. pastoris (strain CCMP1986 / NIES-2087 / MED4).